A 247-amino-acid polypeptide reads, in one-letter code: Acetoacetate decarboxylase 1 (247 aa).

K116 functions as the Schiff-base intermediate with acetoacetate in the catalytic mechanism.

The protein belongs to the ADC family.

The enzyme catalyses acetoacetate + H(+) = acetone + CO2. Catalyzes the conversion of acetoacetate to acetone and carbon dioxide. The sequence is that of Acetoacetate decarboxylase 1 from Mesorhizobium japonicum (strain LMG 29417 / CECT 9101 / MAFF 303099) (Mesorhizobium loti (strain MAFF 303099)).